We begin with the raw amino-acid sequence, 116 residues long: ATP-dependent Clp protease adapter protein ClpS (116 aa).

The span at 1-11 shows a compositional bias: polar residues; the sequence is MRRINTIMQGK. The segment at 1–23 is disordered; it reads MRRINTIMQGKTNGGNGPESGTV.

Belongs to the ClpS family. Binds to the N-terminal domain of the chaperone ClpA.

Its function is as follows. Involved in the modulation of the specificity of the ClpAP-mediated ATP-dependent protein degradation. The protein is ATP-dependent Clp protease adapter protein ClpS of Brucella abortus (strain S19).